We begin with the raw amino-acid sequence, 198 residues long: Recombination protein RecR (198 aa).

The C4-type zinc finger occupies 56 to 71 (CDICGNVSEEPTCRIC). The region spanning 79-175 (AVVCVVEEPK…NVTRLASGLP (97 aa)) is the Toprim domain.

The protein belongs to the RecR family.

Functionally, may play a role in DNA repair. It seems to be involved in an RecBC-independent recombinational process of DNA repair. It may act with RecF and RecO. This is Recombination protein RecR from Saccharopolyspora erythraea (strain ATCC 11635 / DSM 40517 / JCM 4748 / NBRC 13426 / NCIMB 8594 / NRRL 2338).